We begin with the raw amino-acid sequence, 602 residues long: Potassium voltage-gated channel subfamily A member 5 (602 aa).

The tract at residues 1–202 (MEISLVPLEN…FYQLGDEAME (202 aa)) is tetramerization domain. Residues 1 to 238 (MEISLVPLEN…LIFEYPESSG (238 aa)) are Cytoplasmic-facing. A disordered region spans residues 58–107 (EDANQGGRPLPPMAQELPQPRRLSAEDEEGEGDPGLGTVEEDQAPQDAGS). Ser-81 carries the phosphoserine; by CK2 and PKA modification. Lys-212 participates in a covalent cross-link: Glycyl lysine isopeptide (Lys-Gly) (interchain with G-Cter in SUMO). Residues 239-260 (SARAIAIVSVLVILISIITFCL) form a helical membrane-spanning segment. Topologically, residues 261 to 314 (ETLPEFRDERELLRHPPVPPQPPAPAPGINGSVSGALSSGPTVAPLLPRTLADP) are extracellular. A helical membrane pass occupies residues 315–336 (FFIVETTCVIWFTFELLVRFFA). The S-palmitoyl cysteine moiety is linked to residue Cys-337. Over 337–347 (CPSKAEFSRNI) the chain is Cytoplasmic. A helical transmembrane segment spans residues 348–368 (MNIIDVVAIFPYFITLGTELA). Over 369 to 384 (EQQPGGGGQNGQQAMS) the chain is Extracellular. The helical; Voltage-sensor transmembrane segment at 385–405 (LAILRVIRLVRVFRIFKLSRH) threads the bilayer. Topologically, residues 406–420 (SKGLQILGKTLQASM) are cytoplasmic. The segment at 407–420 (KGLQILGKTLQASM) is S4-S5 linker. Residues 421–442 (RELGLLIFFLFIGVILFSSAVY) form a helical membrane-spanning segment. At 443 to 456 (FAEADNHGSHFSSI) the chain is on the extracellular side. The helical intramembrane region spans 457 to 468 (PDAFWWAVVTMT). Residues 469 to 474 (TVGYGD) carry the Selectivity filter motif. Residues 469-476 (TVGYGDMR) lie within the membrane without spanning it. The Extracellular portion of the chain corresponds to 477-483 (PITVGGK). The chain crosses the membrane as a helical span at residues 484–512 (IVGSLCAIAGVLTIALPVPVIVSNFNYFY). Topologically, residues 513 to 602 (HRETDHEEQA…CLDTSRETDL (90 aa)) are cytoplasmic. A compositionally biased stretch (basic and acidic residues) spans 523–536 (ALKEEQGNQRRESG). The segment at 523-543 (ALKEEQGNQRRESGLDTGGQR) is disordered. A Glycyl lysine isopeptide (Lys-Gly) (interchain with G-Cter in SUMO) cross-link involves residue Lys-525. A phosphoserine; by PKA mark is found at Ser-535, Ser-546, and Ser-569. Residues 600 to 602 (TDL) carry the PDZ-binding motif.

Belongs to the potassium channel family. A (Shaker) (TC 1.A.1.2) subfamily. Kv1.5/KCNA5 sub-subfamily. As to quaternary structure, homotetramer and heterotetramer of potassium channel proteins. Interacts with DLG1, which enhances channel currents. Forms a ternary complex with DLG1 and CAV3. Interacts with KCNAB1. Interacts with UBE2I. Interacts with XIRP2; the interaction is required for normal action potential configuration in the heart. Post-translationally, glycosylated. Sumoylated on Lys-212, and Lys-525, preferentially with SUMO3. Sumoylation regulates the voltage sensitivity of the channel. As to expression, expressed equally in atrium, ventricle, aorta and skeletal muscle. Weaker expression in brain.

The protein localises to the cell membrane. It carries out the reaction K(+)(in) = K(+)(out). Voltage-gated potassium channel that mediates transmembrane potassium transport in excitable membranes. Forms tetrameric potassium-selective channels through which potassium ions pass in accordance with their electrochemical gradient. The channel alternates between opened and closed conformations in response to the voltage difference across the membrane. Can form functional homotetrameric channels and heterotetrameric channels that contain variable proportions of KCNA1, KCNA2, KCNA4, KCNA5, and possibly other family members as well; channel properties depend on the type of alpha subunits that are part of the channel. Channel properties are modulated by cytoplasmic beta subunits that regulate the subcellular location of the alpha subunits and promote rapid inactivation. Homotetrameric channels display rapid activation and slow inactivation. Required for normal electrical conduction including formation of the infranodal ventricular conduction system and normal action potential configuration, as a result of its interaction with XIRP2. May play a role in regulating the secretion of insulin in normal pancreatic islets. This Rattus norvegicus (Rat) protein is Potassium voltage-gated channel subfamily A member 5 (Kcna5).